The chain runs to 449 residues: UDP-N-acetylmuramoylalanine--D-glutamate ligase (449 aa).

Position 118–124 (118–124) interacts with ATP; the sequence is GTNGKTT.

Belongs to the MurCDEF family.

It localises to the cytoplasm. The enzyme catalyses UDP-N-acetyl-alpha-D-muramoyl-L-alanine + D-glutamate + ATP = UDP-N-acetyl-alpha-D-muramoyl-L-alanyl-D-glutamate + ADP + phosphate + H(+). Its pathway is cell wall biogenesis; peptidoglycan biosynthesis. Its function is as follows. Cell wall formation. Catalyzes the addition of glutamate to the nucleotide precursor UDP-N-acetylmuramoyl-L-alanine (UMA). This Staphylococcus epidermidis (strain ATCC 12228 / FDA PCI 1200) protein is UDP-N-acetylmuramoylalanine--D-glutamate ligase.